A 910-amino-acid chain; its full sequence is MARRQGPSRSPWAPTQRRRLATDCPCSRVYVLAHTAAAVANSEQYSVENIPYAGGNYHDDYDPRPGGRRHDSDYSLDPNAHHDAYYSQPYDPAPHDASPGGAYGTQPDHYWQDDDVGRPMIQGANAYGPDPHDPDRDPHPDDPFHDEPAPTPTPAPIKRWKTVKEVQLFKGNLVLDCPIPPRLLNQVPHAQPPERDEFTHMRYSAATCDPADFDAERFTLRQKLFAKPRHTELFIVITMYNEEDELFARTMTGVIKNIEYMNSRTNSKTWGKDAWKKIVVCVVSDGRAKINPRTRAVLAALGVYQDGIAKQQVNGKDVTAHIYEYTTQMTLDIKKGVVGVKKGNTPVQMLFCLKEKNQKKINSHRWFFQAFGQVLDPNICVLIDAGTKPGKDSVYQLWKAFDLEPMCAGACGEIKAMLVHGKKLLNPLVATQNFEYKMSNILDKPLESAFGFITVLPGAFSAYRYVALQNDKAGQGPLEKYFAGEKMHGANAGIFTANMYLAEDRILCFELVSKRNCHWILQYVKSATGETDVPTTMAEFISQRRRWLNGSFFAAVYALAHSFDIFRSDHSFLRKTMFLVEFVYQTISMLFAWFALGNFFLVFRILTASLQNELGTAGKVLFIVFEWLYIAVLITCFILSLGNRPQGSNKWYMSMVYFWGVIMAYLMFASIFITVRSIQSQIRNNGGFNASDLLKDKIFATLIISLLSTYVMWLVVSIIFLDPWHMFTSFIQYLLMTPTYINILNVYAFCNTHDITWGTKGDDKPEKLPSVTTKADGKADIHAPTDDADLNTQYETELHVFSTKWKEEKKVPSPGEKQEDYYRGFRSGVVLFWMFCNLALTALVLQAGGLELTVSDPDEAQEKQNQASTIYLAVVLYSVAGLAAFRFIGAMWFLVVRMVSATCRFTSPIY.

Residues 56–156 (NYHDDYDPRP…EPAPTPTPAP (101 aa)) are disordered. 2 stretches are compositionally biased toward basic and acidic residues: residues 57–84 (YHDD…HHDA) and 130–148 (DPHD…HDEP). 9 helical membrane-spanning segments follow: residues 366–386 (WFFQ…IDAG), 448–468 (SAFG…YVAL), 583–603 (VYQT…FLVF), 620–640 (VLFI…FILS), 655–675 (MVYF…FITV), 701–721 (TLII…IIFL), 730–750 (FIQY…YAFC), 828–848 (GVVL…LQAG), and 876–896 (LYSV…FLVV).

Belongs to the chitin synthase family. Class I subfamily.

Its subcellular location is the cell membrane. The enzyme catalyses [(1-&gt;4)-N-acetyl-beta-D-glucosaminyl](n) + UDP-N-acetyl-alpha-D-glucosamine = [(1-&gt;4)-N-acetyl-beta-D-glucosaminyl](n+1) + UDP + H(+). Its function is as follows. Polymerizes chitin, a structural polymer of the cell wall and septum, by transferring the sugar moiety of UDP-GlcNAc to the non-reducing end of the growing chitin polymer. This chain is Chitin synthase A (CHSA), found in Ampelomyces quisqualis (Powdery mildew agent).